Consider the following 185-residue polypeptide: Inner membrane-spanning protein YciB (185 aa).

Helical transmembrane passes span 19–39 (LGGV…QIVI), 53–73 (IMAS…EIRY), 76–96 (WKVT…QFQF), 118–138 (TLNF…IYIS), and 149–169 (FKSF…GVYI).

It belongs to the YciB family.

The protein localises to the cell inner membrane. Functionally, plays a role in cell envelope biogenesis, maintenance of cell envelope integrity and membrane homeostasis. This chain is Inner membrane-spanning protein YciB, found in Haemophilus influenzae (strain PittEE).